Consider the following 118-residue polypeptide: Small ribosomal subunit protein uS13 (118 aa).

The protein belongs to the universal ribosomal protein uS13 family. Part of the 30S ribosomal subunit. Forms a loose heterodimer with protein S19. Forms two bridges to the 50S subunit in the 70S ribosome.

Its function is as follows. Located at the top of the head of the 30S subunit, it contacts several helices of the 16S rRNA. In the 70S ribosome it contacts the 23S rRNA (bridge B1a) and protein L5 of the 50S subunit (bridge B1b), connecting the 2 subunits; these bridges are implicated in subunit movement. Contacts the tRNAs in the A and P-sites. The protein is Small ribosomal subunit protein uS13 of Carsonella ruddii (strain PV).